We begin with the raw amino-acid sequence, 541 residues long: Protein ST7 homolog (541 aa).

The chain crosses the membrane as a helical span at residues 15-35; it reads FYVALTGTSSLISGLILIFEW. Residues 62–116 form a disordered region; sequence DAQSDSSNGSGSSTSSGSSSSSNGGGGGGGGGAGGGGPGAGGGTNSTTTTGTQMP. Positions 67 to 83 are enriched in low complexity; the sequence is SSNGSGSSTSSGSSSSS. Residues 84-105 are compositionally biased toward gly residues; the sequence is NGGGGGGGGGAGGGGPGAGGGT. A helical transmembrane segment spans residues 476–496; it reads LPFFILFTAGLCSFTALLALL.

It belongs to the ST7 family.

It localises to the membrane. This Drosophila pseudoobscura pseudoobscura (Fruit fly) protein is Protein ST7 homolog.